The following is a 237-amino-acid chain: Phosphoribosylaminoimidazole-succinocarboxamide synthase (237 aa).

The protein belongs to the SAICAR synthetase family.

It carries out the reaction 5-amino-1-(5-phospho-D-ribosyl)imidazole-4-carboxylate + L-aspartate + ATP = (2S)-2-[5-amino-1-(5-phospho-beta-D-ribosyl)imidazole-4-carboxamido]succinate + ADP + phosphate + 2 H(+). It functions in the pathway purine metabolism; IMP biosynthesis via de novo pathway; 5-amino-1-(5-phospho-D-ribosyl)imidazole-4-carboxamide from 5-amino-1-(5-phospho-D-ribosyl)imidazole-4-carboxylate: step 1/2. The sequence is that of Phosphoribosylaminoimidazole-succinocarboxamide synthase from Klebsiella pneumoniae (strain 342).